The chain runs to 349 residues: MTEPLKPRIDFPGTLEQERAEAFKAAQAFSGPQAENFAPAVAEELLSDEGPAEAVVEAALRPKRSLWRKMVTAGLTLFGISVVGQGVQWTMNAWQTQDWVALGGCAAGALIIGAGVGSVATEWRRLWRLRQRAHERDEARDLFHSHATGKGRAFCEKLASQAGIDQSHPALQRWYAAIHETQSDREIVSLYASIVQPVLDSQARREISRSAAESTLMIAVSPLALVDMAFIAWRNLRLINRIARLYGIELGYYSRLRLFRLVLLNMAFAGASELVREVGMDWMSQDLAARLSTRAAQGIGAGLLTARLGIKAMELCRPLPWLNDDKPRLGDFRRELIGQLKETLSKKPQ.

Helical transmembrane passes span 70–90 (MVTA…VQWT), 99–119 (WVAL…VGSV), and 213–233 (ESTL…FIAW).

It belongs to the UPF0283 family.

Its subcellular location is the cell inner membrane. The protein is UPF0283 membrane protein Ent638_2153 of Enterobacter sp. (strain 638).